The following is a 377-amino-acid chain: 4-hydroxy-3-methylbut-2-en-1-yl diphosphate synthase (flavodoxin) (377 aa).

Residues Cys272, Cys275, Cys307, and Glu314 each contribute to the [4Fe-4S] cluster site.

This sequence belongs to the IspG family. It depends on [4Fe-4S] cluster as a cofactor.

The enzyme catalyses (2E)-4-hydroxy-3-methylbut-2-enyl diphosphate + oxidized [flavodoxin] + H2O + 2 H(+) = 2-C-methyl-D-erythritol 2,4-cyclic diphosphate + reduced [flavodoxin]. The protein operates within isoprenoid biosynthesis; isopentenyl diphosphate biosynthesis via DXP pathway; isopentenyl diphosphate from 1-deoxy-D-xylulose 5-phosphate: step 5/6. Functionally, converts 2C-methyl-D-erythritol 2,4-cyclodiphosphate (ME-2,4cPP) into 1-hydroxy-2-methyl-2-(E)-butenyl 4-diphosphate. This chain is 4-hydroxy-3-methylbut-2-en-1-yl diphosphate synthase (flavodoxin), found in Zymomonas mobilis subsp. mobilis (strain ATCC 31821 / ZM4 / CP4).